Consider the following 356-residue polypeptide: Neutral protease 2 homolog MEP5 (356 aa).

Positions 1–19 are cleaved as a signal peptide; that stretch reads MRVSSSLIALAALAVQALA. A propeptide spanning residues 20 to 179 is cleaved from the precursor; the sequence is LPVNELAERD…ASAIPELDKR (160 aa). 2 cysteine pairs are disulfide-bonded: cysteine 187-cysteine 259 and cysteine 266-cysteine 284. A Zn(2+)-binding site is contributed by histidine 308. Glutamate 309 is an active-site residue. Zn(2+)-binding residues include histidine 312 and aspartate 323.

It belongs to the peptidase M35 family. The cofactor is Zn(2+).

The protein localises to the secreted. The enzyme catalyses Preferential cleavage of bonds with hydrophobic residues in P1'. Also 3-Asn-|-Gln-4 and 8-Gly-|-Ser-9 bonds in insulin B chain.. Secreted metalloproteinase that allows assimilation of proteinaceous substrates. Shows high activities on basic nuclear substrates such as histone and protamine. May be involved in virulence. This is Neutral protease 2 homolog MEP5 (MEP5) from Coccidioides posadasii (strain C735) (Valley fever fungus).